Here is a 484-residue protein sequence, read N- to C-terminus: Dual specificity protein kinase CLK1 (484 aa).

The segment at 1-42 (MRHSKRTYCPDWDDKDWDYGKWRSSSSHKRRKRSHSSAQENK) is disordered. The span at 26–35 (SSHKRRKRSH) shows a compositional bias: basic residues. At S61 the chain carries Phosphoserine. The interval 79–146 (DYTQGCEPGH…RTRSVEDDEE (68 aa)) is disordered. Positions 86–97 (PGHRQRDHESRY) are enriched in basic and acidic residues. The segment covering 100–112 (HSSKSSGRSGRSS) has biased composition (low complexity). The span at 113-138 (YKSKHRIHHSTSHRRSHGKSHRRKRT) shows a compositional bias: basic residues. T138 carries the post-translational modification Phosphothreonine. Position 140 is a phosphoserine (S140). A Protein kinase domain is found at 161–477 (YEIVDTLGEG…LREALKHPFF (317 aa)). ATP-binding positions include 167–175 (LGEGAFGKV) and K191. D288 functions as the Proton acceptor in the catalytic mechanism.

Belongs to the protein kinase superfamily. CMGC Ser/Thr protein kinase family. Lammer subfamily. In terms of assembly, interacts with PPIG and UBL5. Post-translationally, autophosphorylates on all three types of residues. Endothelial cells.

It localises to the nucleus. The catalysed reaction is L-seryl-[protein] + ATP = O-phospho-L-seryl-[protein] + ADP + H(+). The enzyme catalyses L-threonyl-[protein] + ATP = O-phospho-L-threonyl-[protein] + ADP + H(+). It catalyses the reaction L-tyrosyl-[protein] + ATP = O-phospho-L-tyrosyl-[protein] + ADP + H(+). With respect to regulation, regulates splicing of its own pre-mRNA according to its kinase activity; increased expression of the catalytically active form influences splicing to generate the catalytically inactive splicing variant lacking the kinase domain. Leucettine L41 inhibits its kinase activity and affects the regulation of alternative splicing mediated by phosphorylation of SR proteins. Its function is as follows. Dual specificity kinase acting on both serine/threonine and tyrosine-containing substrates. Phosphorylates serine- and arginine-rich (SR) proteins of the spliceosomal complex and may be a constituent of a network of regulatory mechanisms that enable SR proteins to control RNA splicing. Phosphorylates: SRSF1, SRSF3 and PTPN1. Regulates the alternative splicing of tissue factor (F3) pre-mRNA in endothelial cells. The protein is Dual specificity protein kinase CLK1 of Homo sapiens (Human).